We begin with the raw amino-acid sequence, 56 residues long: Cytochrome b-c1 complex subunit 10 (56 aa).

Over 1–16 (MLSRFLGPRYRELARN) the chain is Mitochondrial matrix. The helical transmembrane segment at 17–38 (WIPTAGMWGTVGAVGLVWATDW) threads the bilayer. Over 39 to 56 (RLILDWVPYINGKFKKDD) the chain is Mitochondrial intermembrane.

This sequence belongs to the UQCR11/QCR10 family. In terms of assembly, component of the ubiquinol-cytochrome c oxidoreductase (cytochrome b-c1 complex, complex III, CIII), a multisubunit enzyme composed of 11 subunits. The complex is composed of 3 respiratory subunits cytochrome b, cytochrome c1 and Rieske protein UQCRFS1, 2 core protein subunits UQCRC1/QCR1 and UQCRC2/QCR2, and 6 low-molecular weight protein subunits UQCRH/QCR6, UQCRB/QCR7, UQCRQ/QCR8, UQCR10/QCR9, UQCR11/QCR10 and subunit 9, the cleavage product of Rieske protein UQCRFS1. The complex exists as an obligatory dimer and forms supercomplexes (SCs) in the inner mitochondrial membrane with NADH-ubiquinone oxidoreductase (complex I, CI) and cytochrome c oxidase (complex IV, CIV), resulting in different assemblies (supercomplex SCI(1)III(2)IV(1) and megacomplex MCI(2)III(2)IV(2)).

The protein localises to the mitochondrion inner membrane. In terms of biological role, component of the ubiquinol-cytochrome c oxidoreductase, a multisubunit transmembrane complex that is part of the mitochondrial electron transport chain which drives oxidative phosphorylation. The respiratory chain contains 3 multisubunit complexes succinate dehydrogenase (complex II, CII), ubiquinol-cytochrome c oxidoreductase (cytochrome b-c1 complex, complex III, CIII) and cytochrome c oxidase (complex IV, CIV), that cooperate to transfer electrons derived from NADH and succinate to molecular oxygen, creating an electrochemical gradient over the inner membrane that drives transmembrane transport and the ATP synthase. The cytochrome b-c1 complex catalyzes electron transfer from ubiquinol to cytochrome c, linking this redox reaction to translocation of protons across the mitochondrial inner membrane, with protons being carried across the membrane as hydrogens on the quinol. In the process called Q cycle, 2 protons are consumed from the matrix, 4 protons are released into the intermembrane space and 2 electrons are passed to cytochrome c. QCR10 has a role in CIII assembly and RIP1 stability. The sequence is that of Cytochrome b-c1 complex subunit 10 (Uqcr11) from Mus musculus (Mouse).